Consider the following 375-residue polypeptide: Chaperone protein DnaJ (375 aa).

The J domain maps to 6-71; sequence DYYEILGVSR…DKRARYDQYG (66 aa). The CR-type zinc finger occupies 132-214; sequence GTTKKITIPR…CQGSGKVRKQ (83 aa). The Zn(2+) site is built by cysteine 145, cysteine 148, cysteine 162, cysteine 165, cysteine 188, cysteine 191, cysteine 202, and cysteine 205. CXXCXGXG motif repeat units lie at residues 145–152, 162–169, 188–195, and 202–209; these read CDTCNGTG, CPQCNGSG, CDRCGGRG, and CPTCQGSG. Residues 222 to 243 are disordered; the sequence is PPGVDTGTRLRMPNEGEAGDKG.

The protein belongs to the DnaJ family. As to quaternary structure, homodimer. Zn(2+) serves as cofactor.

The protein resides in the cytoplasm. In terms of biological role, participates actively in the response to hyperosmotic and heat shock by preventing the aggregation of stress-denatured proteins and by disaggregating proteins, also in an autonomous, DnaK-independent fashion. Unfolded proteins bind initially to DnaJ; upon interaction with the DnaJ-bound protein, DnaK hydrolyzes its bound ATP, resulting in the formation of a stable complex. GrpE releases ADP from DnaK; ATP binding to DnaK triggers the release of the substrate protein, thus completing the reaction cycle. Several rounds of ATP-dependent interactions between DnaJ, DnaK and GrpE are required for fully efficient folding. Also involved, together with DnaK and GrpE, in the DNA replication of plasmids through activation of initiation proteins. The sequence is that of Chaperone protein DnaJ from Halothermothrix orenii (strain H 168 / OCM 544 / DSM 9562).